A 223-amino-acid chain; its full sequence is Thiamine-phosphate synthase (223 aa).

Residues 45–49 and asparagine 77 contribute to the 4-amino-2-methyl-5-(diphosphooxymethyl)pyrimidine site; that span reads QYREK. Positions 78 and 97 each coordinate Mg(2+). Threonine 116 serves as a coordination point for 4-amino-2-methyl-5-(diphosphooxymethyl)pyrimidine. 142–144 contributes to the 2-[(2R,5Z)-2-carboxy-4-methylthiazol-5(2H)-ylidene]ethyl phosphate binding site; it reads SYT. Position 145 (lysine 145) interacts with 4-amino-2-methyl-5-(diphosphooxymethyl)pyrimidine. 2-[(2R,5Z)-2-carboxy-4-methylthiazol-5(2H)-ylidene]ethyl phosphate is bound by residues glycine 173 and 193–194; that span reads VT.

The protein belongs to the thiamine-phosphate synthase family. The cofactor is Mg(2+).

The catalysed reaction is 2-[(2R,5Z)-2-carboxy-4-methylthiazol-5(2H)-ylidene]ethyl phosphate + 4-amino-2-methyl-5-(diphosphooxymethyl)pyrimidine + 2 H(+) = thiamine phosphate + CO2 + diphosphate. It catalyses the reaction 2-(2-carboxy-4-methylthiazol-5-yl)ethyl phosphate + 4-amino-2-methyl-5-(diphosphooxymethyl)pyrimidine + 2 H(+) = thiamine phosphate + CO2 + diphosphate. It carries out the reaction 4-methyl-5-(2-phosphooxyethyl)-thiazole + 4-amino-2-methyl-5-(diphosphooxymethyl)pyrimidine + H(+) = thiamine phosphate + diphosphate. It participates in cofactor biosynthesis; thiamine diphosphate biosynthesis; thiamine phosphate from 4-amino-2-methyl-5-diphosphomethylpyrimidine and 4-methyl-5-(2-phosphoethyl)-thiazole: step 1/1. Functionally, condenses 4-methyl-5-(beta-hydroxyethyl)thiazole monophosphate (THZ-P) and 2-methyl-4-amino-5-hydroxymethyl pyrimidine pyrophosphate (HMP-PP) to form thiamine monophosphate (TMP). The sequence is that of Thiamine-phosphate synthase from Dictyoglomus turgidum (strain DSM 6724 / Z-1310).